Consider the following 566-residue polypeptide: NAD-dependent malic enzyme (566 aa).

Tyr-105 functions as the Proton donor in the catalytic mechanism. Arg-158 lines the NAD(+) pocket. The active-site Proton acceptor is Lys-176. Positions 247, 248, and 271 each coordinate a divalent metal cation. Asp-271 and Asn-419 together coordinate NAD(+).

Belongs to the malic enzymes family. As to quaternary structure, homotetramer. Mg(2+) serves as cofactor. Mn(2+) is required as a cofactor.

It catalyses the reaction (S)-malate + NAD(+) = pyruvate + CO2 + NADH. The enzyme catalyses oxaloacetate + H(+) = pyruvate + CO2. This Acinetobacter baylyi (strain ATCC 33305 / BD413 / ADP1) protein is NAD-dependent malic enzyme.